Consider the following 523-residue polypeptide: GMP synthase [glutamine-hydrolyzing] (523 aa).

Residues 8–205 form the Glutamine amidotransferase type-1 domain; that stretch reads KILILDFGSQ…VVNICGCETK (198 aa). Residue Cys85 is the Nucleophile of the active site. Residues His179 and Glu181 contribute to the active site. A GMPS ATP-PPase domain is found at 206 to 398; it reads WTAENIIEDA…LGLPAEMINR (193 aa). 233–239 lines the ATP pocket; that stretch reads SGGVDSS.

Homodimer.

It catalyses the reaction XMP + L-glutamine + ATP + H2O = GMP + L-glutamate + AMP + diphosphate + 2 H(+). The protein operates within purine metabolism; GMP biosynthesis; GMP from XMP (L-Gln route): step 1/1. Its function is as follows. Catalyzes the synthesis of GMP from XMP. This is GMP synthase [glutamine-hydrolyzing] (guaA) from Haemophilus influenzae (strain ATCC 51907 / DSM 11121 / KW20 / Rd).